We begin with the raw amino-acid sequence, 276 residues long: Eukaryotic translation initiation factor 3 subunit G (276 aa).

At Ser-148 the chain carries Phosphoserine. Residues 195-274 (TTLKISQLNS…LILHLEWSKK (80 aa)) enclose the RRM domain.

Belongs to the eIF-3 subunit G family. Component of the eukaryotic translation initiation factor 3 (eIF-3) complex.

The protein localises to the cytoplasm. In terms of biological role, RNA-binding component of the eukaryotic translation initiation factor 3 (eIF-3) complex, which is involved in protein synthesis of a specialized repertoire of mRNAs and, together with other initiation factors, stimulates binding of mRNA and methionyl-tRNAi to the 40S ribosome. The eIF-3 complex specifically targets and initiates translation of a subset of mRNAs involved in cell proliferation. This subunit can bind 18S rRNA. This Debaryomyces hansenii (strain ATCC 36239 / CBS 767 / BCRC 21394 / JCM 1990 / NBRC 0083 / IGC 2968) (Yeast) protein is Eukaryotic translation initiation factor 3 subunit G.